The sequence spans 299 residues: Protoheme IX farnesyltransferase (299 aa).

The next 8 helical transmembrane spans lie at 25-45 (IVSL…PDLA), 51-71 (LFGT…NHLI), 97-117 (ALAF…FLVN), 119-139 (LTAW…TAFL), 147-167 (IVLG…AVTG), 173-193 (AFLL…ALAL), 225-245 (FLLF…LLYL), and 275-295 (FGYS…DHYL).

Belongs to the UbiA prenyltransferase family. Protoheme IX farnesyltransferase subfamily.

The protein localises to the cell inner membrane. It catalyses the reaction heme b + (2E,6E)-farnesyl diphosphate + H2O = Fe(II)-heme o + diphosphate. It participates in porphyrin-containing compound metabolism; heme O biosynthesis; heme O from protoheme: step 1/1. In terms of biological role, converts heme B (protoheme IX) to heme O by substitution of the vinyl group on carbon 2 of heme B porphyrin ring with a hydroxyethyl farnesyl side group. The protein is Protoheme IX farnesyltransferase of Nitrosococcus oceani (strain ATCC 19707 / BCRC 17464 / JCM 30415 / NCIMB 11848 / C-107).